The chain runs to 325 residues: Tetraacyldisaccharide 4'-kinase (325 aa).

Position 55–62 (threonine 55–threonine 62) interacts with ATP.

Belongs to the LpxK family.

The catalysed reaction is a lipid A disaccharide + ATP = a lipid IVA + ADP + H(+). The protein operates within glycolipid biosynthesis; lipid IV(A) biosynthesis; lipid IV(A) from (3R)-3-hydroxytetradecanoyl-[acyl-carrier-protein] and UDP-N-acetyl-alpha-D-glucosamine: step 6/6. Transfers the gamma-phosphate of ATP to the 4'-position of a tetraacyldisaccharide 1-phosphate intermediate (termed DS-1-P) to form tetraacyldisaccharide 1,4'-bis-phosphate (lipid IVA). In Salmonella choleraesuis (strain SC-B67), this protein is Tetraacyldisaccharide 4'-kinase.